The following is a 169-amino-acid chain: Peptide deformylase (169 aa).

Residues C91 and H133 each contribute to the Fe cation site. E134 is a catalytic residue. H137 contacts Fe cation.

The protein belongs to the polypeptide deformylase family. The cofactor is Fe(2+).

The catalysed reaction is N-terminal N-formyl-L-methionyl-[peptide] + H2O = N-terminal L-methionyl-[peptide] + formate. Removes the formyl group from the N-terminal Met of newly synthesized proteins. Requires at least a dipeptide for an efficient rate of reaction. N-terminal L-methionine is a prerequisite for activity but the enzyme has broad specificity at other positions. The sequence is that of Peptide deformylase from Shigella boydii serotype 18 (strain CDC 3083-94 / BS512).